The chain runs to 310 residues: Glutarate 2-hydroxylase (310 aa).

Fe cation-binding residues include His160, Asp162, and His277.

This sequence belongs to the glutarate hydroxylase family. Homotetramer. It depends on Fe(2+) as a cofactor.

The catalysed reaction is glutarate + 2-oxoglutarate + O2 = (S)-2-hydroxyglutarate + succinate + CO2. It participates in amino-acid degradation. In terms of biological role, acts as an alpha-ketoglutarate-dependent dioxygenase catalyzing hydroxylation of glutarate (GA) to L-2-hydroxyglutarate (L2HG). Functions in a L-lysine degradation pathway that proceeds via cadaverine, glutarate and L-2-hydroxyglutarate. The protein is Glutarate 2-hydroxylase of Shigella flexneri.